The following is a 408-amino-acid chain: Elongation factor Tu (408 aa).

A tr-type G domain is found at 10–219 (KTHVNVGTIG…ALDTYIPDPV (210 aa)). GTP is bound by residues 19–26 (GHVDHGKT), 88–92 (DCPGH), and 143–146 (NKCD). Threonine 26 contributes to the Mg(2+) binding site.

The protein belongs to the TRAFAC class translation factor GTPase superfamily. Classic translation factor GTPase family. EF-Tu/EF-1A subfamily. As to quaternary structure, monomer.

Its subcellular location is the cytoplasm. The catalysed reaction is GTP + H2O = GDP + phosphate + H(+). GTP hydrolase that promotes the GTP-dependent binding of aminoacyl-tRNA to the A-site of ribosomes during protein biosynthesis. The sequence is that of Elongation factor Tu from Brachyspira hyodysenteriae (strain ATCC 49526 / WA1).